The following is a 310-amino-acid chain: Methionyl-tRNA formyltransferase (310 aa).

109 to 112 (SLLP) contributes to the (6S)-5,6,7,8-tetrahydrofolate binding site.

Belongs to the Fmt family.

It catalyses the reaction L-methionyl-tRNA(fMet) + (6R)-10-formyltetrahydrofolate = N-formyl-L-methionyl-tRNA(fMet) + (6S)-5,6,7,8-tetrahydrofolate + H(+). Functionally, attaches a formyl group to the free amino group of methionyl-tRNA(fMet). The formyl group appears to play a dual role in the initiator identity of N-formylmethionyl-tRNA by promoting its recognition by IF2 and preventing the misappropriation of this tRNA by the elongation apparatus. The chain is Methionyl-tRNA formyltransferase from Staphylococcus epidermidis (strain ATCC 35984 / DSM 28319 / BCRC 17069 / CCUG 31568 / BM 3577 / RP62A).